Here is a 105-residue protein sequence, read N- to C-terminus: MICOS complex subunit Mic10 (105 aa).

Residues 29-46 form a helical membrane-spanning segment; sequence LLKVTGGVAIGIVASVAF. Topologically, residues 47 to 105 are mitochondrial intermembrane; that stretch reads FKSRSWPIWFGSGVGLGTGWSNCRHDFASPYVLHGKRVPAGQDSQGKPAYNIITEQHKQ. Residues 85 to 105 are disordered; that stretch reads PAGQDSQGKPAYNIITEQHKQ.

The protein belongs to the MICOS complex subunit Mic10 family. In terms of assembly, component of the mitochondrial contact site and cristae organizing system (MICOS) complex.

Its subcellular location is the mitochondrion inner membrane. Its function is as follows. Component of the MICOS complex, a large protein complex of the mitochondrial inner membrane that plays crucial roles in the maintenance of crista junctions, inner membrane architecture, and formation of contact sites to the outer membrane. This Caenorhabditis elegans protein is MICOS complex subunit Mic10.